Reading from the N-terminus, the 548-residue chain is Glucose-6-phosphate isomerase (548 aa).

The active-site Proton donor is the glutamate 355. Residues histidine 386 and lysine 514 contribute to the active site.

It belongs to the GPI family.

Its subcellular location is the cytoplasm. It catalyses the reaction alpha-D-glucose 6-phosphate = beta-D-fructose 6-phosphate. Its pathway is carbohydrate biosynthesis; gluconeogenesis. It functions in the pathway carbohydrate degradation; glycolysis; D-glyceraldehyde 3-phosphate and glycerone phosphate from D-glucose: step 2/4. Functionally, catalyzes the reversible isomerization of glucose-6-phosphate to fructose-6-phosphate. The sequence is that of Glucose-6-phosphate isomerase from Photorhabdus laumondii subsp. laumondii (strain DSM 15139 / CIP 105565 / TT01) (Photorhabdus luminescens subsp. laumondii).